Reading from the N-terminus, the 256-residue chain is MLIVISPAKNLDYDTPMPKVKTTKAAMLEDSAELIEGLKQLAPQDVSKLMHISDKLGTLNYDRFQSWSLTFTKANARPAVLAFNGDVYVGLDAYSFTDEDFAFAQDHLRILSGLYGALRPLDLMQPYRLEMGTKFANNRGKDLYAFWGSKITDALNKQLKKVGSETVVNLASNEYFKSVKPKALNGEIITPVFKEWKDGKYKIISFFAKKARGLMSAYIIKNKLTQVEQLKSFDWDGYTFNKAMSDGSELVFTRKQ.

It belongs to the UPF0246 family.

In Saccharophagus degradans (strain 2-40 / ATCC 43961 / DSM 17024), this protein is UPF0246 protein Sde_3824.